A 344-amino-acid polypeptide reads, in one-letter code: Arginine N-succinyltransferase (344 aa).

A succinyl-CoA-binding site is contributed by Leu125. Residue His229 is the Proton donor of the active site.

This sequence belongs to the arginine N-succinyltransferase family.

The enzyme catalyses succinyl-CoA + L-arginine = N(2)-succinyl-L-arginine + CoA + H(+). It functions in the pathway amino-acid degradation; L-arginine degradation via AST pathway; L-glutamate and succinate from L-arginine: step 1/5. Functionally, catalyzes the transfer of succinyl-CoA to arginine to produce N(2)-succinylarginine. The polypeptide is Arginine N-succinyltransferase (Salmonella dublin (strain CT_02021853)).